The following is a 35-amino-acid chain: Photosystem II reaction center protein M (35 aa).

A helical transmembrane segment spans residues Gly-7 to Ile-27.

This sequence belongs to the PsbM family. In terms of assembly, PSII is composed of 1 copy each of membrane proteins PsbA, PsbB, PsbC, PsbD, PsbE, PsbF, PsbH, PsbI, PsbJ, PsbK, PsbL, PsbM, PsbT, PsbX, PsbY, PsbZ, Psb30/Ycf12, peripheral proteins PsbO, CyanoQ (PsbQ), PsbU, PsbV and a large number of cofactors. It forms dimeric complexes.

It is found in the cellular thylakoid membrane. In terms of biological role, one of the components of the core complex of photosystem II (PSII). PSII is a light-driven water:plastoquinone oxidoreductase that uses light energy to abstract electrons from H(2)O, generating O(2) and a proton gradient subsequently used for ATP formation. It consists of a core antenna complex that captures photons, and an electron transfer chain that converts photonic excitation into a charge separation. This subunit is found at the monomer-monomer interface. In Synechococcus elongatus (strain ATCC 33912 / PCC 7942 / FACHB-805) (Anacystis nidulans R2), this protein is Photosystem II reaction center protein M.